A 435-amino-acid chain; its full sequence is Nuclear hormone receptor family member nhr-136 (435 aa).

Residues 50–129 (PSNCKVCRHS…AGMNPSAIQA (80 aa)) constitute a DNA-binding region (nuclear receptor). 2 consecutive NR C4-type zinc fingers follow at residues 53-73 (CKVCRHSATGYHYDVPSCNGC) and 89-112 (CLKMRKCLSGTEPVDLSRRMCRAC). In terms of domain architecture, NR LBD spans 194–430 (RDIRKLDELI…RYTRISNLYE (237 aa)).

It belongs to the nuclear hormone receptor family.

It localises to the nucleus. Functionally, orphan nuclear receptor. In Caenorhabditis elegans, this protein is Nuclear hormone receptor family member nhr-136 (nhr-136).